The following is a 715-amino-acid chain: Fatty acid oxidation complex subunit alpha (715 aa).

The interval 8 to 197 (NSQPSAFSLT…NLGLVEEAVP (190 aa)) is enoyl-CoA hydratase. The interval 313–715 (ATIKKVGVLG…MANEEQSFYS (403 aa)) is 3-hydroxyacyl-CoA dehydrogenase.

It in the N-terminal section; belongs to the enoyl-CoA hydratase/isomerase family. In the central section; belongs to the 3-hydroxyacyl-CoA dehydrogenase family. In terms of assembly, heterotetramer of two alpha chains (FadJ) and two beta chains (FadI).

It localises to the cytoplasm. It catalyses the reaction a (3S)-3-hydroxyacyl-CoA = a (2E)-enoyl-CoA + H2O. It carries out the reaction a 4-saturated-(3S)-3-hydroxyacyl-CoA = a (3E)-enoyl-CoA + H2O. The catalysed reaction is a (3S)-3-hydroxyacyl-CoA + NAD(+) = a 3-oxoacyl-CoA + NADH + H(+). The enzyme catalyses (3S)-3-hydroxybutanoyl-CoA = (3R)-3-hydroxybutanoyl-CoA. It participates in lipid metabolism; fatty acid beta-oxidation. In terms of biological role, catalyzes the formation of a hydroxyacyl-CoA by addition of water on enoyl-CoA. Also exhibits 3-hydroxyacyl-CoA epimerase and 3-hydroxyacyl-CoA dehydrogenase activities. This chain is Fatty acid oxidation complex subunit alpha, found in Photobacterium profundum (strain SS9).